A 199-amino-acid chain; its full sequence is RNA-free ribonuclease P (199 aa).

Belongs to the HARP family.

It catalyses the reaction Endonucleolytic cleavage of RNA, removing 5'-extranucleotides from tRNA precursor.. RNA-free RNase P that catalyzes the removal of the 5'-leader sequence from pre-tRNA to produce the mature 5'-terminus. The sequence is that of RNA-free ribonuclease P from Pyrococcus furiosus (strain ATCC 43587 / DSM 3638 / JCM 8422 / Vc1).